The primary structure comprises 360 residues: Archaemetzincin-2 (360 aa).

Residue H254 coordinates Zn(2+). E255 acts as the Proton acceptor in catalysis. H258, H264, C265, C270, C289, and C292 together coordinate Zn(2+).

It belongs to the peptidase M54 family. Requires Zn(2+) as cofactor. Down-regulated in testis from patients with maturation arrest (MA) or Sertoli cell-only syndrome (SCOS).

Probable zinc metalloprotease. This chain is Archaemetzincin-2 (AMZ2), found in Homo sapiens (Human).